The chain runs to 1184 residues: uncharacterized protein (1184 aa).

2 disordered regions span residues 115–152 and 397–426; these read ETSS…AHVS and TYKP…VPER. Polar residues-rich tracts occupy residues 137-152 and 397-421; these read HVMN…AHVS and TYKP…TSHN. Phosphoserine is present on S686. 4 stretches are compositionally biased toward basic and acidic residues: residues 705 to 767, 783 to 792, 849 to 863, and 891 to 902; these read LSER…ESAH, FEHETEPSHY, SHAH…RDLG, and YLHDEKTRDTLT. Disordered stretches follow at residues 705–870 and 890–1017; these read LSER…FGDV and DYLH…SSPK. S905 is subject to Phosphoserine. Residues 920-932 show a composition bias toward basic and acidic residues; sequence EDHPHASEAERAH. Residues 941–950 show a composition bias toward low complexity; sequence SSESSPESQS. Basic and acidic residues predominate over residues 999–1011; that stretch reads PRERLDDNAKEIL. S1018 carries the post-translational modification Phosphoserine. Disordered regions lie at residues 1029–1107 and 1135–1154; these read NRKD…IGTQ and DVDN…KSRP. Residues 1032–1045 show a composition bias toward basic and acidic residues; sequence DKAAVKRMLEEDSS. The segment covering 1073 to 1107 has biased composition (polar residues); that stretch reads PAVNNSTKPVAVTSKNGHSRNGSHAAHSNNVIGTQ. Low complexity predominate over residues 1138–1150; that stretch reads NVVSGHSNVNGVS.

The protein resides in the cytoplasm. This is an uncharacterized protein from Schizosaccharomyces pombe (strain 972 / ATCC 24843) (Fission yeast).